A 299-amino-acid polypeptide reads, in one-letter code: Transcription factor BHLH148 (299 aa).

The tract at residues 90 to 127 (RMGGGGGGGEKGEGEEMEEEEEVPQRRRRGQGADVESS) is disordered. The span at 102 to 111 (EGEEMEEEEE) shows a compositional bias: acidic residues. The tract at residues 127–140 (SRGFRHMMRERQRR) is basic motif; degenerate. The 50-residue stretch at 127-176 (SRGFRHMMRERQRREKLSQSYADLYAMVSSRSKGDKNSIVQSAAIYIHEL) folds into the bHLH domain. Residues 141 to 176 (EKLSQSYADLYAMVSSRSKGDKNSIVQSAAIYIHEL) are helix-loop-helix motif. Residues 273–299 (ERNQPDSDAPFPGSKGWTQTSHVQNVF) are disordered. Residues 288–299 (GWTQTSHVQNVF) show a composition bias toward polar residues.

The protein belongs to the bHLH protein family. Interacts with TIFY10A/JAZ6, TIFY10B/JAZ7, TIFY11A/JAZ9, TIFY11C/JAZ11, and TIFY11D/JAZ12.

Its subcellular location is the nucleus. In terms of biological role, may act on an initial response of jasmonate-regulated gene expression toward drought tolerance as part of a BHLH148-TIFY11D/JAZ12-COI1A complex. This chain is Transcription factor BHLH148, found in Oryza sativa subsp. japonica (Rice).